The following is a 364-amino-acid chain: D-alanine--D-alanine ligase (364 aa).

An ATP-grasp domain is found at 134 to 344; that stretch reads KVLLKSFNIP…YESLVDKLIT (211 aa). Position 167 to 222 (167 to 222) interacts with ATP; the sequence is NNKLNYPVIVKPSVLGSSIGINVAYNVSQIEKYIEEAFEYDLTVVVEKFIKAREIE. Positions 297, 311, and 313 each coordinate Mg(2+).

This sequence belongs to the D-alanine--D-alanine ligase family. Requires Mg(2+) as cofactor. Mn(2+) serves as cofactor.

The protein resides in the cytoplasm. The catalysed reaction is 2 D-alanine + ATP = D-alanyl-D-alanine + ADP + phosphate + H(+). It participates in cell wall biogenesis; peptidoglycan biosynthesis. Cell wall formation. The chain is D-alanine--D-alanine ligase from Borrelia duttonii (strain Ly).